The primary structure comprises 317 residues: Melanocyte-stimulating hormone receptor (317 aa).

The segment at 1-26 (MPVQGSPRSLLGAVNSTPTATPHLRP) is disordered. Topologically, residues 1–37 (MPVQGSPRSLLGAVNSTPTATPHLRPAANQTGPQCLE) are extracellular. A glycan (N-linked (GlcNAc...) asparagine) is linked at Asn-29. Residues 38–63 (VSIPDGLFLCLGLVSLVENTLVVAAI) form a helical membrane-spanning segment. Topologically, residues 64–72 (AKNRNLHSP) are cytoplasmic. Residues 73–93 (MYCFVCCLALSDLLVSVSSVL) form a helical membrane-spanning segment. Topologically, residues 94–118 (ETAVLLLLGAGALAAQATVVQLLGN) are extracellular. Residues 119–140 (VIDVLLCSSMVSSLFFLGAIAM) form a helical membrane-spanning segment. Topologically, residues 141–163 (DRYISIFYALRYHSIVTLARARR) are cytoplasmic. Residues 164–183 (AIAAIWAASMLSSTLFIAYC) form a helical membrane-spanning segment. Over 184–191 (DHTAALLC) the chain is Extracellular. The chain crosses the membrane as a helical span at residues 192–211 (LVVFFLAMLVLMAVLYVHML). Residues 212–240 (TQACQHAQGIARLHKRQRPVQQGWGLKGA) are Cytoplasmic-facing. A helical transmembrane segment spans residues 241–266 (ATLAILLGVFFLCWGPFFLHLTLIAV). Over 267–279 (CPQHPTCSCIFKN) the chain is Extracellular. The helical transmembrane segment at 280 to 300 (FRLFLALIVCNAIVDPLIYAF) threads the bilayer. Over 301 to 317 (RSQELCKTLKELLLFSW) the chain is Cytoplasmic.

Belongs to the G-protein coupled receptor 1 family. Interacts with MGRN1, but does not undergo MGRN1-mediated ubiquitination; this interaction competes with GNAS-binding and thus inhibits agonist-induced cAMP production. Interacts with OPN3; the interaction results in a decrease in MC1R-mediated cAMP signaling and ultimately a decrease in melanin production in melanocytes.

The protein localises to the cell membrane. Functionally, receptor for MSH (alpha, beta and gamma) and ACTH. The activity of this receptor is mediated by G proteins which activate adenylate cyclase. Mediates melanogenesis, the production of eumelanin (black/brown) and phaeomelanin (red/yellow), via regulation of cAMP signaling in melanocytes. The polypeptide is Melanocyte-stimulating hormone receptor (MC1R) (Hapalemur griseus (Gray gentle lemur)).